The primary structure comprises 267 residues: Imidazole glycerol phosphate synthase subunit HisF (267 aa).

Residues D22 and D141 contribute to the active site.

This sequence belongs to the HisA/HisF family. As to quaternary structure, heterodimer of HisH and HisF.

Its subcellular location is the cytoplasm. The catalysed reaction is 5-[(5-phospho-1-deoxy-D-ribulos-1-ylimino)methylamino]-1-(5-phospho-beta-D-ribosyl)imidazole-4-carboxamide + L-glutamine = D-erythro-1-(imidazol-4-yl)glycerol 3-phosphate + 5-amino-1-(5-phospho-beta-D-ribosyl)imidazole-4-carboxamide + L-glutamate + H(+). Its pathway is amino-acid biosynthesis; L-histidine biosynthesis; L-histidine from 5-phospho-alpha-D-ribose 1-diphosphate: step 5/9. Functionally, IGPS catalyzes the conversion of PRFAR and glutamine to IGP, AICAR and glutamate. The HisF subunit catalyzes the cyclization activity that produces IGP and AICAR from PRFAR using the ammonia provided by the HisH subunit. The chain is Imidazole glycerol phosphate synthase subunit HisF from Mycobacterium bovis (strain ATCC BAA-935 / AF2122/97).